Reading from the N-terminus, the 165-residue chain is HTH-type transcriptional regulator MmpR5 (165 aa).

The HTH marR-type domain occupies 1–151 (MSVNDGVDQM…LLAYMENVVS (151 aa)). The H-T-H motif DNA-binding region spans 53–76 (SEELATALAASSGGISTNARMLIQ).

As to quaternary structure, homodimer.

Functionally, controls the expression level of the Mmps2-MmpL2, MmpS4-MmpL4, and MmpS5-MmpL5 transport systems. Also controls its own expression. Acts by binding directly to the promoter regions. The chain is HTH-type transcriptional regulator MmpR5 from Mycobacterium tuberculosis (strain ATCC 25618 / H37Rv).